A 148-amino-acid polypeptide reads, in one-letter code: MEVILLEKVANLGSLGDKVKVKAGYGRNFLLPYGKAVPATEANVKAFEERRAELEKAAAEKLAAAQARAEALEGASFTITSKAGEEGKLFGSIGVRDIADAVSTGGTEVEKSEVRLPEGPIRVTGEYDIELQLHTDVEVTIKLAVVAE.

The protein belongs to the bacterial ribosomal protein bL9 family.

Binds to the 23S rRNA. This Marinobacter nauticus (strain ATCC 700491 / DSM 11845 / VT8) (Marinobacter aquaeolei) protein is Large ribosomal subunit protein bL9.